The following is a 602-amino-acid chain: Elongation factor 4 (602 aa).

Residues 7–188 (ENIRNFSIIA…AIVELIPPPK (182 aa)) enclose the tr-type G domain. GTP-binding positions include 19–24 (DHGKST) and 135–138 (NKID).

Belongs to the TRAFAC class translation factor GTPase superfamily. Classic translation factor GTPase family. LepA subfamily.

Its subcellular location is the cell inner membrane. The enzyme catalyses GTP + H2O = GDP + phosphate + H(+). Its function is as follows. Required for accurate and efficient protein synthesis under certain stress conditions. May act as a fidelity factor of the translation reaction, by catalyzing a one-codon backward translocation of tRNAs on improperly translocated ribosomes. Back-translocation proceeds from a post-translocation (POST) complex to a pre-translocation (PRE) complex, thus giving elongation factor G a second chance to translocate the tRNAs correctly. Binds to ribosomes in a GTP-dependent manner. In Chlamydia abortus (strain DSM 27085 / S26/3) (Chlamydophila abortus), this protein is Elongation factor 4.